Reading from the N-terminus, the 128-residue chain is UPF0325 protein CKO_03204 (128 aa).

The protein belongs to the UPF0325 family.

The protein is UPF0325 protein CKO_03204 of Citrobacter koseri (strain ATCC BAA-895 / CDC 4225-83 / SGSC4696).